Reading from the N-terminus, the 397-residue chain is UDP-GlcNAc:betaGal beta-1,3-N-acetylglucosaminyltransferase 7 (397 aa).

The Cytoplasmic segment spans residues 1 to 6 (MSLWKK). Residues 7-26 (TLYKSVCLALALLVAVTVFQ) traverse the membrane as a helical; Signal-anchor for type II membrane protein segment. At 27 to 397 (RSVTPGQFLQ…LTCSLKFQVL (371 aa)) the chain is on the lumenal side. Residues Asn-84, Asn-90, Asn-210, and Asn-387 are each glycosylated (N-linked (GlcNAc...) asparagine).

This sequence belongs to the glycosyltransferase 31 family.

Its subcellular location is the golgi apparatus membrane. The protein operates within protein modification; protein glycosylation. In terms of biological role, N-acetyl glucosamine (GlcNAc) transferase that catalyzes the transfer of GlcNAc via a beta1-&gt;3 linkage from UDP-GlcNAc to the non-reducing terminal galactose (Gal) in the linearly growing chain of N- and O-linked keratan sulfate proteoglycans. Cooperates with B4GALT4 galactosyltransferase and CHST6 and CHST1 sulfotransferases to construct and elongate mono- and disulfated disaccharide units [-&gt;3Galbeta1-&gt;4(6-sulfoGlcNAcbeta)1-&gt;] and [-&gt;3(6-sulfoGalbeta)1-&gt;4(6-sulfoGlcNAcbeta)1-&gt;] within keratan sulfate polymer. Involved in biosynthesis of N-linked keratan sulfate proteoglycans in cornea, with an impact on proteoglycan fibril organization and corneal transparency. May play a role in the maintenance of tissue architecture by suppressing cellular motility and invasion. The sequence is that of UDP-GlcNAc:betaGal beta-1,3-N-acetylglucosaminyltransferase 7 (B3gnt7) from Rattus norvegicus (Rat).